Consider the following 717-residue polypeptide: UvrABC system protein C (717 aa).

In terms of domain architecture, GIY-YIG spans 16–95 (DSPGVYKFRD…IKEFDPRFNV (80 aa)). One can recognise a UVR domain in the interval 208 to 243 (GTYIRRLEKDMMQAAEEMEYERAARLRDDAEALKRA). Residues 467-548 (ERTGEWEEAP…PREDDGRPKR (82 aa)) are disordered. Over residues 477–522 (EAAPGSASVHASATGPAATGQATAGPAAMGQAAAGPVSTGPAATGP) the composition is skewed to low complexity.

The protein belongs to the UvrC family. Interacts with UvrB in an incision complex.

The protein localises to the cytoplasm. Functionally, the UvrABC repair system catalyzes the recognition and processing of DNA lesions. UvrC both incises the 5' and 3' sides of the lesion. The N-terminal half is responsible for the 3' incision and the C-terminal half is responsible for the 5' incision. This is UvrABC system protein C from Streptomyces griseus subsp. griseus (strain JCM 4626 / CBS 651.72 / NBRC 13350 / KCC S-0626 / ISP 5235).